Consider the following 265-residue polypeptide: tRNA (guanine-N(1)-)-methyltransferase (265 aa).

Residues Gly-119 and 139 to 144 each bind S-adenosyl-L-methionine; that span reads VGDYIL.

The protein belongs to the RNA methyltransferase TrmD family. In terms of assembly, homodimer.

It is found in the cytoplasm. It catalyses the reaction guanosine(37) in tRNA + S-adenosyl-L-methionine = N(1)-methylguanosine(37) in tRNA + S-adenosyl-L-homocysteine + H(+). Specifically methylates guanosine-37 in various tRNAs. The chain is tRNA (guanine-N(1)-)-methyltransferase from Pseudoalteromonas atlantica (strain T6c / ATCC BAA-1087).